We begin with the raw amino-acid sequence, 153 residues long: Cytochrome c-type biogenesis protein CcmE (153 aa).

The Cytoplasmic segment spans residues 1-6; it reads MNARRR. The chain crosses the membrane as a helical; Signal-anchor for type II membrane protein span at residues 7–27; it reads LWSVLMLILAVGTAATLTIMA. The Periplasmic segment spans residues 28-153; it reads LRHNLTYLYM…LDTPIAETTP (126 aa). Heme-binding residues include H121 and Y125. Polar residues predominate over residues 131 to 141; the sequence is ANKMQPTPTQH. The segment at 131-153 is disordered; that stretch reads ANKMQPTPTQHTHLDTPIAETTP.

This sequence belongs to the CcmE/CycJ family.

The protein localises to the cell inner membrane. Heme chaperone required for the biogenesis of c-type cytochromes. Transiently binds heme delivered by CcmC and transfers the heme to apo-cytochromes in a process facilitated by CcmF and CcmH. The sequence is that of Cytochrome c-type biogenesis protein CcmE from Xylella fastidiosa (strain Temecula1 / ATCC 700964).